Consider the following 367-residue polypeptide: Glutamate 5-kinase (367 aa).

Lys10 contributes to the ATP binding site. The substrate site is built by Ser50, Asp137, and Asn149. ATP is bound by residues 169-170 and 211-217; these read TD and TGGMSTK. Residues 275 to 353 enclose the PUA domain; the sequence is AGEITVDEGA…QQIDAILGYE (79 aa).

Belongs to the glutamate 5-kinase family.

The protein resides in the cytoplasm. The enzyme catalyses L-glutamate + ATP = L-glutamyl 5-phosphate + ADP. The protein operates within amino-acid biosynthesis; L-proline biosynthesis; L-glutamate 5-semialdehyde from L-glutamate: step 1/2. Its function is as follows. Catalyzes the transfer of a phosphate group to glutamate to form L-glutamate 5-phosphate. The protein is Glutamate 5-kinase of Salmonella agona (strain SL483).